A 652-amino-acid polypeptide reads, in one-letter code: DNA ligase (652 aa).

NAD(+) contacts are provided by residues 29-33, 78-79, and E107; these read DSEYD and SL. K109 functions as the N6-AMP-lysine intermediate in the catalytic mechanism. R130, E164, K278, and K302 together coordinate NAD(+). Residues C395, C398, C413, and C418 each coordinate Zn(2+). The BRCT domain maps to 577–652; the sequence is VADAALSGLT…VRDEAWLESL (76 aa).

The protein belongs to the NAD-dependent DNA ligase family. LigA subfamily. It depends on Mg(2+) as a cofactor. The cofactor is Mn(2+).

The catalysed reaction is NAD(+) + (deoxyribonucleotide)n-3'-hydroxyl + 5'-phospho-(deoxyribonucleotide)m = (deoxyribonucleotide)n+m + AMP + beta-nicotinamide D-nucleotide.. Functionally, DNA ligase that catalyzes the formation of phosphodiester linkages between 5'-phosphoryl and 3'-hydroxyl groups in double-stranded DNA using NAD as a coenzyme and as the energy source for the reaction. It is essential for DNA replication and repair of damaged DNA. In Streptococcus pneumoniae (strain P1031), this protein is DNA ligase.